Here is a 186-residue protein sequence, read N- to C-terminus: Adenylate kinase isoenzyme 6 homolog (186 aa).

Positions 15, 17, 18, 19, and 20 each coordinate ATP. An NMPbind region spans residues 48-71 (NLSNIIKDERLYKEFDDELDASIY). Residues 126–136 (KRNYTKEKIKN) form an LID region. An ATP-binding site is contributed by R127.

This sequence belongs to the adenylate kinase family. AK6 subfamily. Monomer and homodimer. Interacts with small ribosomal subunit protein uS11. Not a structural component of 43S pre-ribosomes, but transiently interacts with them by binding to uS11.

It localises to the cytoplasm. The protein localises to the nucleus. The catalysed reaction is AMP + ATP = 2 ADP. The enzyme catalyses ATP + H2O = ADP + phosphate + H(+). Functionally, broad-specificity nucleoside monophosphate (NMP) kinase that catalyzes the reversible transfer of the terminal phosphate group between nucleoside triphosphates and monophosphates. Also has ATPase activity. Involved in the late cytoplasmic maturation steps of the 40S ribosomal particles, specifically 18S rRNA maturation. While NMP activity is not required for ribosome maturation, ATPase activity is. Associates transiently with small ribosomal subunit protein uS11. ATP hydrolysis breaks the interaction with uS11. May temporarily remove uS11 from the ribosome to enable a conformational change of the ribosomal RNA that is needed for the final maturation step of the small ribosomal subunit. Its NMP activity may have a role in nuclear energy homeostasis. The chain is Adenylate kinase isoenzyme 6 homolog from Plasmodium falciparum (isolate 3D7).